The sequence spans 259 residues: Sphinganine C4-monooxygenase 2 (259 aa).

Helical transmembrane passes span Phe-10–Leu-30, Ala-54–Phe-74, and Ile-91–Phe-111. The Fatty acid hydroxylase domain maps to Phe-98–Thr-234. The Histidine box-1 signature appears at His-113–His-117. Positions His-127 to His-131 match the Histidine box-2 motif. The Histidine box-3 motif lies at Tyr-206–Gln-212.

It belongs to the sterol desaturase family. Requires Fe cation as cofactor. Ubiquitous, with higher levels in flowers and roots.

The protein resides in the endoplasmic reticulum membrane. The catalysed reaction is a dihydroceramide + 2 Fe(II)-[cytochrome b5] + O2 + 2 H(+) = a phytoceramide + 2 Fe(III)-[cytochrome b5] + H2O. It participates in membrane lipid metabolism; sphingolipid biosynthesis. In terms of biological role, involved in sphingolipid trihydroxy long-chain base (4-hydroxysphinganine) biosynthesis. Can use C18- and C20-sphinganine as substrates to produce C18- and C20-phytosphinganines (D-ribo-2-amino-1,3,4-trihydroxyoctadecane and -eicosane). This Arabidopsis thaliana (Mouse-ear cress) protein is Sphinganine C4-monooxygenase 2 (SBH2).